Consider the following 511-residue polypeptide: Cobyric acid synthase (511 aa).

Positions 251–443 (LLDIAIICLP…IHGIFDNDIF (193 aa)) constitute a GATase cobBQ-type domain. Cys332 functions as the Nucleophile in the catalytic mechanism. His435 is an active-site residue.

This sequence belongs to the CobB/CobQ family. CobQ subfamily.

The protein operates within cofactor biosynthesis; adenosylcobalamin biosynthesis. In terms of biological role, catalyzes amidations at positions B, D, E, and G on adenosylcobyrinic A,C-diamide. NH(2) groups are provided by glutamine, and one molecule of ATP is hydrogenolyzed for each amidation. The chain is Cobyric acid synthase from Listeria innocua serovar 6a (strain ATCC BAA-680 / CLIP 11262).